The sequence spans 278 residues: Urease accessory protein UreD (278 aa).

It belongs to the UreD family. UreD, UreF and UreG form a complex that acts as a GTP-hydrolysis-dependent molecular chaperone, activating the urease apoprotein by helping to assemble the nickel containing metallocenter of UreC. The UreE protein probably delivers the nickel.

It localises to the cytoplasm. Required for maturation of urease via the functional incorporation of the urease nickel metallocenter. The polypeptide is Urease accessory protein UreD (Escherichia coli).